Reading from the N-terminus, the 271-residue chain is 4-diphosphocytidyl-2-C-methyl-D-erythritol kinase (271 aa).

Residue K17 is part of the active site. 97 to 107 (PVGSGLGGGSS) contacts ATP. The active site involves D137.

It belongs to the GHMP kinase family. IspE subfamily.

It catalyses the reaction 4-CDP-2-C-methyl-D-erythritol + ATP = 4-CDP-2-C-methyl-D-erythritol 2-phosphate + ADP + H(+). Its pathway is isoprenoid biosynthesis; isopentenyl diphosphate biosynthesis via DXP pathway; isopentenyl diphosphate from 1-deoxy-D-xylulose 5-phosphate: step 3/6. Functionally, catalyzes the phosphorylation of the position 2 hydroxy group of 4-diphosphocytidyl-2C-methyl-D-erythritol. This chain is 4-diphosphocytidyl-2-C-methyl-D-erythritol kinase, found in Thermotoga petrophila (strain ATCC BAA-488 / DSM 13995 / JCM 10881 / RKU-1).